The following is a 184-amino-acid chain: NADH-quinone oxidoreductase subunit B (184 aa).

[4Fe-4S] cluster is bound by residues C37, C38, C103, and C132.

The protein belongs to the complex I 20 kDa subunit family. In terms of assembly, NDH-1 is composed of 14 different subunits. Subunits NuoB, C, D, E, F, and G constitute the peripheral sector of the complex. [4Fe-4S] cluster is required as a cofactor.

It localises to the cell membrane. The catalysed reaction is a quinone + NADH + 5 H(+)(in) = a quinol + NAD(+) + 4 H(+)(out). Functionally, NDH-1 shuttles electrons from NADH, via FMN and iron-sulfur (Fe-S) centers, to quinones in the respiratory chain. The immediate electron acceptor for the enzyme in this species is believed to be a menaquinone. Couples the redox reaction to proton translocation (for every two electrons transferred, four hydrogen ions are translocated across the cytoplasmic membrane), and thus conserves the redox energy in a proton gradient. This Mycolicibacterium paratuberculosis (strain ATCC BAA-968 / K-10) (Mycobacterium paratuberculosis) protein is NADH-quinone oxidoreductase subunit B.